A 199-amino-acid polypeptide reads, in one-letter code: Imidazoleglycerol-phosphate dehydratase (199 aa).

Belongs to the imidazoleglycerol-phosphate dehydratase family.

The protein resides in the cytoplasm. The enzyme catalyses D-erythro-1-(imidazol-4-yl)glycerol 3-phosphate = 3-(imidazol-4-yl)-2-oxopropyl phosphate + H2O. Its pathway is amino-acid biosynthesis; L-histidine biosynthesis; L-histidine from 5-phospho-alpha-D-ribose 1-diphosphate: step 6/9. The protein is Imidazoleglycerol-phosphate dehydratase of Lactococcus lactis subsp. cremoris (strain MG1363).